Consider the following 814-residue polypeptide: Cadherin-15 (814 aa).

An N-terminal signal peptide occupies residues 1-21; that stretch reads MDAAFLLVLGLLAQSLCLSLG. The propeptide occupies 22 to 60; that stretch reads VPGWRRPTTLYPWRRAPALSRVRRAWVIPPISVSENHKR. Cadherin domains follow at residues 61–152, 153–260, 261–375, 376–481, and 482–590; these read LPYP…RPAF, LQEA…APEF, TRDE…PPVF, QENP…DHAP, and VLAP…VCLP. Residues 61–606 lie on the Extracellular side of the membrane; it reads LPYPLVQIKS…AGGTGLSLGA (546 aa). Residue Asn227 is glycosylated (N-linked (GlcNAc...) asparagine). N-linked (GlcNAc...) asparagine glycans are attached at residues Asn531, Asn538, and Asn576. Residues 607–626 traverse the membrane as a helical segment; that stretch reads LVIVLASALLLLVLVLLVAL. Topologically, residues 627–814 are cytoplasmic; that stretch reads RARFWKQSRG…LLPRHRGRTA (188 aa). Disordered stretches follow at residues 636-663 and 676-703; these read GKGL…GEED and TALS…PPRV.

Expressed in the brain and cerebellum.

Its subcellular location is the cell membrane. Its function is as follows. Cadherins are calcium-dependent cell adhesion proteins. They preferentially interact with themselves in a homophilic manner in connecting cells; cadherins may thus contribute to the sorting of heterogeneous cell types. M-cadherin is part of the myogenic program and may provide a trigger for terminal muscle differentiation. This chain is Cadherin-15 (CDH15), found in Homo sapiens (Human).